We begin with the raw amino-acid sequence, 385 residues long: 8-amino-7-oxononanoate synthase (385 aa).

Residue R21 participates in substrate binding. Position 108–109 (108–109 (GF)) interacts with pyridoxal 5'-phosphate. H133 is a substrate binding site. Positions 179, 207, and 233 each coordinate pyridoxal 5'-phosphate. K236 carries the N6-(pyridoxal phosphate)lysine modification. Substrate is bound at residue T352.

It belongs to the class-II pyridoxal-phosphate-dependent aminotransferase family. BioF subfamily. In terms of assembly, homodimer. Pyridoxal 5'-phosphate is required as a cofactor.

The enzyme catalyses 6-carboxyhexanoyl-[ACP] + L-alanine + H(+) = (8S)-8-amino-7-oxononanoate + holo-[ACP] + CO2. It participates in cofactor biosynthesis; biotin biosynthesis. Its function is as follows. Catalyzes the decarboxylative condensation of pimeloyl-[acyl-carrier protein] and L-alanine to produce 8-amino-7-oxononanoate (AON), [acyl-carrier protein], and carbon dioxide. In Klebsiella pneumoniae subsp. pneumoniae (strain ATCC 700721 / MGH 78578), this protein is 8-amino-7-oxononanoate synthase.